A 425-amino-acid chain; its full sequence is NAD kinase 2, mitochondrial (425 aa).

The transit peptide at 1–45 (MDTSAIQQTLVKIYQRQAWQPPRKASKNETTVGKPRELAGGGSPA) directs the protein to the mitochondrion. A disordered region spans residues 20–46 (QPPRKASKNETTVGKPRELAGGGSPAD). Residue K59 is modified to N6-acetyllysine; alternate. K59 is modified (N6-succinyllysine; alternate). A Phosphoserine modification is found at S171. K285 bears the N6-succinyllysine mark. K300 carries the N6-acetyllysine; alternate modification. K300 carries the post-translational modification N6-succinyllysine; alternate. The residue at position 350 (S350) is a Phosphoserine. N6-acetyllysine is present on K380.

This sequence belongs to the NAD kinase family. As to quaternary structure, homodimer.

It is found in the mitochondrion. The enzyme catalyses NAD(+) + ATP = ADP + NADP(+) + H(+). With respect to regulation, inhibited by NADH, NADPH and NADP(+). Its function is as follows. Mitochondrial NAD(+) kinase that phosphorylates NAD(+) to yield NADP(+). Can use both ATP or inorganic polyphosphate as the phosphoryl donor. The chain is NAD kinase 2, mitochondrial (Nadk2) from Rattus norvegicus (Rat).